The sequence spans 466 residues: Uronate isomerase (466 aa).

It belongs to the metallo-dependent hydrolases superfamily. Uronate isomerase family.

The catalysed reaction is D-glucuronate = D-fructuronate. The enzyme catalyses aldehydo-D-galacturonate = keto-D-tagaturonate. Its pathway is carbohydrate metabolism; pentose and glucuronate interconversion. This chain is Uronate isomerase, found in Streptococcus pneumoniae (strain 70585).